Consider the following 250-residue polypeptide: DNA repair protein RecO (250 aa).

This sequence belongs to the RecO family.

Involved in DNA repair and RecF pathway recombination. This Staphylococcus haemolyticus (strain JCSC1435) protein is DNA repair protein RecO.